A 24-amino-acid chain; its full sequence is Transaldolase (24 aa).

Belongs to the transaldolase family.

Its subcellular location is the cytoplasm. The enzyme catalyses D-sedoheptulose 7-phosphate + D-glyceraldehyde 3-phosphate = D-erythrose 4-phosphate + beta-D-fructose 6-phosphate. Its pathway is carbohydrate degradation; pentose phosphate pathway; D-glyceraldehyde 3-phosphate and beta-D-fructose 6-phosphate from D-ribose 5-phosphate and D-xylulose 5-phosphate (non-oxidative stage): step 2/3. Functionally, transaldolase is important for the balance of metabolites in the pentose-phosphate pathway. The polypeptide is Transaldolase (Capsicum annuum var. annuum (Red pepper)).